The following is a 162-amino-acid chain: Nascent polypeptide-associated complex subunit beta (162 aa).

2 disordered regions span residues Met-1–Glu-39 and Glu-130–Glu-162. Over residues Thr-24–Ala-33 the composition is skewed to basic residues. Residues Ser-38 to Ile-103 enclose the NAC-A/B domain. Over residues Gly-146–Glu-162 the composition is skewed to acidic residues.

It belongs to the NAC-beta family. Part of the nascent polypeptide-associated complex (NAC), consisting of EGD2 and EGD1. NAC associates with ribosomes via EGD1.

It is found in the cytoplasm. It localises to the nucleus. Functionally, component of the nascent polypeptide-associated complex (NAC), a dynamic component of the ribosomal exit tunnel, protecting the emerging polypeptides from interaction with other cytoplasmic proteins to ensure appropriate nascent protein targeting. The NAC complex also promotes mitochondrial protein import by enhancing productive ribosome interactions with the outer mitochondrial membrane and blocks the inappropriate interaction of ribosomes translating non-secretory nascent polypeptides with translocation sites in the membrane of the endoplasmic reticulum. EGD1 may act as a transcription factor that exert a negative effect on the expression of several genes that are transcribed by RNA polymerase II. The chain is Nascent polypeptide-associated complex subunit beta (EGD1) from Yarrowia lipolytica (strain CLIB 122 / E 150) (Yeast).